The primary structure comprises 499 residues: GTPase Der (499 aa).

EngA-type G domains follow at residues 3–166 (PVVA…LETL) and 213–386 (IKFA…QSAT). GTP is bound by residues 9-16 (GRPNVGKS), 56-60 (DTGGI), 118-121 (NKTD), 219-226 (GRPNVGKS), 266-270 (DTAGV), and 331-334 (NKWD). Positions 387 to 471 (RRTSTAMLTR…PIRVEFQESA (85 aa)) constitute a KH-like domain. A disordered region spans residues 476–499 (GRKNTMTLSQERQRKRLLKAKTKK). A compositionally biased stretch (basic residues) spans 488 to 499 (QRKRLLKAKTKK).

The protein belongs to the TRAFAC class TrmE-Era-EngA-EngB-Septin-like GTPase superfamily. EngA (Der) GTPase family. As to quaternary structure, associates with the 50S ribosomal subunit.

Its function is as follows. GTPase that plays an essential role in the late steps of ribosome biogenesis. This Aeromonas salmonicida (strain A449) protein is GTPase Der.